The sequence spans 347 residues: Selenide, water dikinase (347 aa).

Cys-17 is an active-site residue. ATP-binding positions include Lys-20 and 48–50; that span reads TRD. Position 51 (Asp-51) interacts with Mg(2+). Residues Asp-68, Asp-91, and 139 to 141 contribute to the ATP site; that span reads GHS. Position 91 (Asp-91) interacts with Mg(2+). Asp-227 contacts Mg(2+).

Belongs to the selenophosphate synthase 1 family. Class I subfamily. As to quaternary structure, homodimer. It depends on Mg(2+) as a cofactor.

The enzyme catalyses hydrogenselenide + ATP + H2O = selenophosphate + AMP + phosphate + 2 H(+). In terms of biological role, synthesizes selenophosphate from selenide and ATP. The polypeptide is Selenide, water dikinase (Enterobacter sp. (strain 638)).